A 437-amino-acid polypeptide reads, in one-letter code: Zinc finger CCCH domain-containing protein 40 (437 aa).

A C3H1-type zinc finger spans residues 6–33 (MYKTKLCILFNKTGDCSRPNCTFAHGNA). The interval 35–107 (LRRPGESSFT…MPFENRRDKD (73 aa)) is disordered. A compositionally biased stretch (basic and acidic residues) spans 48–85 (HNMDSDLRDRRHNMDSDLRDRLGRQFSPERRPSLDRSG). Positions 145 to 244 (NNVLEEQLKD…LGNQLSTYLA (100 aa)) form a coiled coil. The residue at position 259 (Ser259) is a Phosphoserine. Disordered stretches follow at residues 266–360 (RNLR…RRRF) and 380–437 (EFDD…DDSV). Residues 307–319 (RGEEEKVENEKKR) show a composition bias toward basic and acidic residues. 2 stretches are compositionally biased toward acidic residues: residues 333-343 (EEESGAWNDED) and 383-392 (DVAESEEENP). The segment covering 426 to 437 (MEQKKAYDDDSV) has biased composition (basic and acidic residues).

This chain is Zinc finger CCCH domain-containing protein 40, found in Arabidopsis thaliana (Mouse-ear cress).